We begin with the raw amino-acid sequence, 323 residues long: 4-hydroxythreonine-4-phosphate dehydrogenase (323 aa).

Thr-133 contacts substrate. A divalent metal cation is bound by residues His-161, His-206, and His-261. Substrate-binding residues include Lys-269, Asn-278, and Arg-287.

This sequence belongs to the PdxA family. As to quaternary structure, homodimer. Requires Zn(2+) as cofactor. It depends on Mg(2+) as a cofactor. Co(2+) serves as cofactor.

It is found in the cytoplasm. It carries out the reaction 4-(phosphooxy)-L-threonine + NAD(+) = 3-amino-2-oxopropyl phosphate + CO2 + NADH. It functions in the pathway cofactor biosynthesis; pyridoxine 5'-phosphate biosynthesis; pyridoxine 5'-phosphate from D-erythrose 4-phosphate: step 4/5. Functionally, catalyzes the NAD(P)-dependent oxidation of 4-(phosphooxy)-L-threonine (HTP) into 2-amino-3-oxo-4-(phosphooxy)butyric acid which spontaneously decarboxylates to form 3-amino-2-oxopropyl phosphate (AHAP). This Xanthomonas axonopodis pv. citri (strain 306) protein is 4-hydroxythreonine-4-phosphate dehydrogenase.